The following is a 221-amino-acid chain: Protein-L-isoaspartate O-methyltransferase (221 aa).

Ser68 is an active-site residue.

The protein belongs to the methyltransferase superfamily. L-isoaspartyl/D-aspartyl protein methyltransferase family.

Its subcellular location is the cytoplasm. It catalyses the reaction [protein]-L-isoaspartate + S-adenosyl-L-methionine = [protein]-L-isoaspartate alpha-methyl ester + S-adenosyl-L-homocysteine. Its function is as follows. Catalyzes the methyl esterification of L-isoaspartyl residues in peptides and proteins that result from spontaneous decomposition of normal L-aspartyl and L-asparaginyl residues. It plays a role in the repair and/or degradation of damaged proteins. The sequence is that of Protein-L-isoaspartate O-methyltransferase from Desulfosudis oleivorans (strain DSM 6200 / JCM 39069 / Hxd3) (Desulfococcus oleovorans).